The chain runs to 568 residues: MRQTMTFIPTLKEVPADAEVKSHQLLLRAGFIRQVASGIYSYLPLATLTLRKIEAIVREELEAIGAAEMLMPALQPAELWHESGRWADYGPELMRLKDRAARDFVLGPTHEELITSLLRDEIKSYKRLPITLYQIQTKFRDEKRPRFGLLRGREFIMKDAYSFHATSESLDETFELMHQAYSNIFSRCGLEFRSVIADSGSIGGNESKEFMALSDIGEDTIAYSDASDYAANTEMAPVLYMEKKSHELEKELEKVATENQKTIADIVEFLEVPIEKTMKSMLYQVDEEVIMVLVRGDHEVNDIKIKNALDATNVELVDPNVAFELLGANFGSLGPIGVPEKIRVFADNAVKGIVNAVAGANEDGYHYVNVNPNRDFEVTSYFDLRMIQAGDLSPDGQGVIKFAEGIEVGHIFKLGTKYSEAMNATILDENGRAQPIIMGCYGIGLSRILSAIAEQSNDENGLVWDKQISPFDLHLIPVNMKSEEQVAFAESLYDSLQKAGFSVLIDDRTERAGVKFADADLIGLPIRITVGKKAAEGIVEVKIRKTGEMIEVRQDELLNTLPILFGDK.

This sequence belongs to the class-II aminoacyl-tRNA synthetase family. ProS type 1 subfamily. As to quaternary structure, homodimer.

The protein localises to the cytoplasm. It catalyses the reaction tRNA(Pro) + L-proline + ATP = L-prolyl-tRNA(Pro) + AMP + diphosphate. Catalyzes the attachment of proline to tRNA(Pro) in a two-step reaction: proline is first activated by ATP to form Pro-AMP and then transferred to the acceptor end of tRNA(Pro). As ProRS can inadvertently accommodate and process non-cognate amino acids such as alanine and cysteine, to avoid such errors it has two additional distinct editing activities against alanine. One activity is designated as 'pretransfer' editing and involves the tRNA(Pro)-independent hydrolysis of activated Ala-AMP. The other activity is designated 'posttransfer' editing and involves deacylation of mischarged Ala-tRNA(Pro). The misacylated Cys-tRNA(Pro) is not edited by ProRS. This is Proline--tRNA ligase from Listeria innocua serovar 6a (strain ATCC BAA-680 / CLIP 11262).